Here is a 2364-residue protein sequence, read N- to C-terminus: Spectrin beta chain, non-erythrocytic 1 (2364 aa).

At Thr2 the chain carries N-acetylthreonine. The tract at residues 2 to 275 is actin-binding; sequence TTTVATDYDN…IITYVVTYYH (274 aa). 2 positions are modified to phosphoserine: Ile14 and Ser36. 2 Calponin-homology (CH) domains span residues 54 to 158 and 173 to 278; these read AVQK…LRFQ and KSAK…HYFS. The residue at position 90 (Lys90) is an N6-acetyllysine. Ser228 is subject to Phosphoserine. Spectrin repeat units lie at residues 303-411, 423-525, 530-636, 639-742, 745-847, 850-952, 957-1060, 1063-1166, 1170-1258, 1276-1376, 1381-1482, 1486-1590, 1592-1696, 1698-1801, and 1805-1907; these read MIEK…LALR, LARR…QRLE, LQKI…RLEE, RLWK…RLEE, LLHQ…ALQD, ALYK…DALL, IQNY…SLGE, KLQQ…NLLS, AYQQ…DRHR, DLQK…AQRL, KAEL…HNLL, EIHQ…RLEE, HRAQ…KLDE, HRLF…TQIL, and YELH…RVRL. Ser817, Ser825, Ser903, Ser1057, Ser1076, Ser1079, and Ser1237 each carry phosphoserine. Ser1388, Ser1447, and Ser1557 each carry phosphoserine. Residues 1563 to 2093 form an interaction with ANK2 region; that stretch reads IRQRLADLKQ…LLEVRRQQEE (531 aa). Tyr1805 is subject to Phosphotyrosine. N6-acetyllysine occurs at positions 1815, 1913, and 1989. 2 Spectrin repeats span residues 1914–2014 and 2018–2097; these read FRFF…EWLR and EVHQ…EERK. The interval 2089–2196 is disordered; the sequence is RQQEEEERKR…TLPARTQETP (108 aa). 3 positions are modified to phosphoserine: Ser2102, Ser2128, and Ser2138. The span at 2115-2131 shows a compositional bias: polar residues; that stretch reads SQQQWDTSKGEQVSQNG. The span at 2145 to 2166 shows a compositional bias: polar residues; sequence VDTSEMVNGATEQRTSSKESSP. Residue Thr2147 is modified to Phosphothreonine. Ser2148 carries the phosphoserine modification. The interval 2149–2177 is mediates interaction with CAMSAP1; it reads EMVNGATEQRTSSKESSPIPSPTSDRKAK. Phosphothreonine is present on Thr2159. Phosphoserine is present on residues Ser2160, Ser2161, Ser2164, Ser2165, and Ser2169. A Phosphothreonine modification is found at Thr2171. 2 positions are modified to phosphoserine: Ser2172 and Ser2184. Over residues 2184-2196 the composition is skewed to polar residues; the sequence is SAATLPARTQETP. Thr2187 and Thr2195 each carry phosphothreonine. The PH domain maps to 2197-2307; sequence SAQMEGFLNR…WIQAISSAIS (111 aa). The interval 2309–2364 is disordered; it reads DKHEVSASTQSTPASSRAQTLPTSVVTITSESSPGKREKDKEKDKEKRFSLFGKKK. Phosphoserine occurs at positions 2314 and 2319. Positions 2314–2341 are enriched in polar residues; the sequence is SASTQSTPASSRAQTLPTSVVTITSESS. Thr2320 bears the Phosphothreonine mark. O-linked (GlcNAc) serine glycosylation occurs at Ser2324. Position 2328 is a phosphothreonine (Thr2328). Ser2340 and Ser2341 each carry phosphoserine. The segment covering 2342-2357 has biased composition (basic and acidic residues); sequence PGKREKDKEKDKEKRF.

This sequence belongs to the spectrin family. Interacts with CAMSAP1. Interacts with ANK2. Interacts with CPNE4 (via VWFA domain). Like erythrocyte spectrin, the spectrin-like proteins are capable to form dimers which can further associate to tetramers. Can form heterodimers with SPTAN1. Isoform Short cannot bind to the axonal protein fodaxin. Isoform 2 is present in brain, lung and kidney (at protein level).

The protein localises to the cytoplasm. It localises to the cytoskeleton. Its subcellular location is the myofibril. The protein resides in the sarcomere. It is found in the m line. The protein localises to the cytosol. It localises to the cell membrane. In terms of biological role, fodrin, which seems to be involved in secretion, interacts with calmodulin in a calcium-dependent manner and is thus candidate for the calcium-dependent movement of the cytoskeleton at the membrane. Plays a critical role in central nervous system development and function. This is Spectrin beta chain, non-erythrocytic 1 (SPTBN1) from Homo sapiens (Human).